The primary structure comprises 281 residues: Probable endonuclease 4 (281 aa).

Residues His-69, His-109, Glu-145, Asp-179, His-182, His-216, Asp-229, His-231, and Glu-261 each coordinate Zn(2+).

The protein belongs to the AP endonuclease 2 family. Requires Zn(2+) as cofactor.

It carries out the reaction Endonucleolytic cleavage to 5'-phosphooligonucleotide end-products.. In terms of biological role, endonuclease IV plays a role in DNA repair. It cleaves phosphodiester bonds at apurinic or apyrimidinic (AP) sites, generating a 3'-hydroxyl group and a 5'-terminal sugar phosphate. The polypeptide is Probable endonuclease 4 (Proteus mirabilis (strain HI4320)).